Consider the following 323-residue polypeptide: uncharacterized protein (323 aa).

The first 45 residues, 1-45 (MLATLSQIRAWSTEHLIDAAGYWTETADRWEDVFLQMRNQAHAIA), serve as a signal peptide directing secretion. Residues 186-227 (FKQDGPTPPPPGAPHPSGGADGPYSDPITSMMLPPAGTEAPV) form a disordered region. 2 helical membrane-spanning segments follow: residues 269-289 (SAEW…VVGT) and 290-310 (ALAI…LLGV).

The protein resides in the cell membrane. This is an uncharacterized protein from Mycobacterium tuberculosis (strain CDC 1551 / Oshkosh).